Here is a 430-residue protein sequence, read N- to C-terminus: C-terminal-binding protein 1 (430 aa).

The interval 1 to 59 (MSGVRPPIMNGPMHPRPLVALLDGRDCTVEMPILKDVATVAFCDAQSTQEIHEKVLNEA) is interaction with GLIS2 1. NAD(+)-binding positions include serine 89, 169–174 (IGLGRV), aspartate 193, 226–232 (CGLNEHN), 253–255 (TAR), and aspartate 279. The active site involves arginine 255. Residues 277 to 349 (ALDVHESEPF…VNKDHLTAAT (73 aa)) are interaction with GLIS2 2. Glutamate 284 is a catalytic residue. At serine 289 the chain carries Phosphoserine. The Proton donor role is filled by histidine 304. Positions 398-430 (SHGLPPVAHPPHAPSPGQTVKPEADRDHTTDQL) are disordered. At serine 412 the chain carries Phosphoserine. A Glycyl lysine isopeptide (Lys-Gly) (interchain with G-Cter in SUMO) cross-link involves residue lysine 418. Residues 419 to 430 (PEADRDHTTDQL) are compositionally biased toward basic and acidic residues.

It belongs to the D-isomer specific 2-hydroxyacid dehydrogenase family. In terms of assembly, homo- or heterodimer. Heterodimer with CTBP2. Interacts with ELK3 (via its PXDLS motif). Interacts with RBBP8 (via its PXDLS motif); the interaction is disrupted by binding to adenovirus E1A. Interacts with PNN, MECOM and ZFHX1B. Interacts with ZNF366 (via PXDLS motif). Interaction with SATB1 (non-acetylated form); the interaction stabilizes its attachment to DNA and promotes transcription repression. Interacts with PRDM16; the interaction represses white adipose tissue (WAT)-specific genes expression. Interacts with GLIS2, HIPK2, FOXP1, FOXP2, HDAC4, HDAC5, HDAC9, NRIP1 and WIZ. Interacts with ZNF217. Interacts with BCL6; the interaction is required for BCL6 transcriptional autoinhibition and inhibition of some BCL6 target genes. Interacts with IKZF4. Interacts with MCRIP1 (unphosphorylated form, via the PXDLS motif); competitively inhibiting CTBP-ZEB1 interaction. Interacts with Bassoon/BSN; this interaction targets and anchors CTBP1 to presynapses. Interacts with SIMC1. It depends on NAD(+) as a cofactor. Post-translationally, the level of phosphorylation appears to be regulated during the cell cycle. Phosphorylation by HIPK2 on Ser-412 induces proteasomal degradation. ADP-ribosylated; when cells are exposed to brefeldin A. In terms of processing, sumoylation on Lys-418 is promoted by the E3 SUMO-protein ligase CBX4.

The protein resides in the cytoplasm. It localises to the nucleus. Its subcellular location is the synapse. It is found in the synaptosome. In terms of biological role, corepressor targeting diverse transcription regulators such as GLIS2 or BCL6. Has dehydrogenase activity. Involved in controlling the equilibrium between tubular and stacked structures in the Golgi complex. Functions in brown adipose tissue (BAT) differentiation. In Rattus norvegicus (Rat), this protein is C-terminal-binding protein 1 (Ctbp1).